The following is a 118-amino-acid chain: Large ribosomal subunit protein bL20 (118 aa).

The protein belongs to the bacterial ribosomal protein bL20 family.

Functionally, binds directly to 23S ribosomal RNA and is necessary for the in vitro assembly process of the 50S ribosomal subunit. It is not involved in the protein synthesizing functions of that subunit. The protein is Large ribosomal subunit protein bL20 of Lactobacillus delbrueckii subsp. bulgaricus (strain ATCC BAA-365 / Lb-18).